Reading from the N-terminus, the 938-residue chain is Protein zds1 (938 aa).

Residues 1–13 (MSSSSVSNTLSIE) show a composition bias toward polar residues. Disordered stretches follow at residues 1–140 (MSSS…LDKE), 326–386 (HRGK…VENQ), and 424–807 (SENK…EPKT). Over residues 40-54 (LSGSSSEPLENNSSL) the composition is skewed to low complexity. Residues 57 to 67 (STDDPSVEIRS) are compositionally biased toward basic and acidic residues. Positions 77–86 (NLLSDQNITI) are enriched in polar residues. Low complexity predominate over residues 116–126 (SDAQSSVPSFS). Basic and acidic residues predominate over residues 127 to 140 (EIHDGMSEEELDKE). Composition is skewed to polar residues over residues 330–349 (TSTL…TDTS) and 370–380 (TSALSNSQNPS). Over residues 429-440 (ESAVASESSLSE) the composition is skewed to low complexity. Basic and acidic residues-rich tracts occupy residues 467–485 (NKAE…DKSE) and 512–556 (NKAE…KADD). Residues 558-567 (LPSNNKTEGY) are compositionally biased toward polar residues. Residues 587–596 (VIPPRVPTPV) show a composition bias toward pro residues. Positions 622–635 (SSKKPEIFHERHIP) are enriched in basic and acidic residues. The segment covering 642–669 (NKPSKNNILKSTQVPVTPKQKSSTANKG) has biased composition (polar residues). Positions 702–711 (KEHKKDKQKK) are enriched in basic residues. Low complexity predominate over residues 715–725 (QISSSSKSASS). Basic and acidic residues predominate over residues 798–807 (SDEKSTEPKT).

It is found in the cytoplasm. Functionally, has a role in establishing cell polarity. Also required for maintenance of cell wall integrity, sexual differentiation, calcium tolerance and cell morphology. Involved in Ras-MAPK signaling pathway at cell cortex. Has a role in meiosis. The sequence is that of Protein zds1 (zds1) from Schizosaccharomyces pombe (strain 972 / ATCC 24843) (Fission yeast).